A 267-amino-acid polypeptide reads, in one-letter code: Cell division control protein 11 (267 aa).

The Septin-type G domain maps to 6 to 263 (QNRRFTIMAA…ENYRAAVLEG (258 aa)). Residues 16–23 (GPRGSGKS) are G1 motif. GTP-binding positions include 16-23 (GPRGSGKS), Gly-66, 146-154 (KSDGLSITE), and Arg-212. A G3 motif region spans residues 63-66 (DTPG). Residues 145 to 148 (SKSD) form a G4 motif region.

It belongs to the TRAFAC class TrmE-Era-EngA-EngB-Septin-like GTPase superfamily. Septin GTPase family. As to quaternary structure, component of the septin complex.

Functionally, septins are GTPases involved in cytokinesis. The septins localize to the site of cleavage and act as a structural scaffold that recruits different components involved in diverse processes at specific stages during the cell cycle. Septins are also involved in cell morphogenesis, chitin deposition, cell cycle regulation, cell compartmentalization and spore wall formation. This chain is Cell division control protein 11 (CDC11), found in Encephalitozoon cuniculi (strain GB-M1) (Microsporidian parasite).